The chain runs to 208 residues: Protein GrpE (208 aa).

Residues 1–25 (MVDNKDFNEELKENIQEELDNETKA) show a composition bias toward basic and acidic residues. The interval 1 to 38 (MVDNKDFNEELKENIQEELDNETKAENPNIDEEVEEVS) is disordered. The segment covering 29–38 (NIDEEVEEVS) has biased composition (acidic residues).

This sequence belongs to the GrpE family. In terms of assembly, homodimer.

Its subcellular location is the cytoplasm. Its function is as follows. Participates actively in the response to hyperosmotic and heat shock by preventing the aggregation of stress-denatured proteins, in association with DnaK and GrpE. It is the nucleotide exchange factor for DnaK and may function as a thermosensor. Unfolded proteins bind initially to DnaJ; upon interaction with the DnaJ-bound protein, DnaK hydrolyzes its bound ATP, resulting in the formation of a stable complex. GrpE releases ADP from DnaK; ATP binding to DnaK triggers the release of the substrate protein, thus completing the reaction cycle. Several rounds of ATP-dependent interactions between DnaJ, DnaK and GrpE are required for fully efficient folding. The polypeptide is Protein GrpE (Clostridium perfringens (strain ATCC 13124 / DSM 756 / JCM 1290 / NCIMB 6125 / NCTC 8237 / Type A)).